Here is a 144-residue protein sequence, read N- to C-terminus: Large ribosomal subunit protein uL15 (144 aa).

Residues 1 to 53 (MRLNSLSPAEGAKHSAKRLGRGIGSGLGKTGGRGHKGQKSRTGGGVRRGFEGG) are disordered. A compositionally biased stretch (gly residues) spans 21-31 (RGIGSGLGKTG).

The protein belongs to the universal ribosomal protein uL15 family. Part of the 50S ribosomal subunit.

Its function is as follows. Binds to the 23S rRNA. This chain is Large ribosomal subunit protein uL15, found in Glaesserella parasuis serovar 5 (strain SH0165) (Haemophilus parasuis).